The primary structure comprises 1157 residues: Zinc finger protein 516 (1157 aa).

Over residues 1–13 (MDRSREAEMELRR) the composition is skewed to basic and acidic residues. Residues 1–26 (MDRSREAEMELRRGPSPPRAGRSHEV) are disordered. The interval 1–420 (MDRSREAEME…ATRGKVAEPA (420 aa)) is mediates promoter DNA-binding and activation of transcription. C2H2-type zinc fingers lie at residues 34-56 (HSCC…MRKH), 62-84 (YKCP…IRSH), 162-185 (VPCS…HQAH), 188-211 (FKCR…ERDH), 236-258 (FPCE…MKKH), 264-286 (HGCH…MKAH), and 323-345 (EVCT…NAIH). Positions 449-458 (SQEKRKREQD) are enriched in basic and acidic residues. 2 disordered regions span residues 449-503 (SQEK…QGKS) and 523-653 (SRVH…KGPE). The segment covering 494-503 (ASATTGQGKS) has biased composition (polar residues). A C2H2-type 8 zinc finger spans residues 504–526 (SECFECGKIFRTYHQMVLHSRVH). Basic and acidic residues predominate over residues 531–541 (RDRDPEGDRAA). The span at 550-561 (EGDSASQPSSPG) shows a compositional bias: polar residues. The segment covering 575-585 (EVVDDSGEEAV) has biased composition (acidic residues). Over residues 601 to 612 (GEVTPTALSNGD) the composition is skewed to polar residues. Lysine 630 participates in a covalent cross-link: Glycyl lysine isopeptide (Lys-Gly) (interchain with G-Cter in SUMO2). Positions 644–653 (SSRETTKGPE) are enriched in basic and acidic residues. Residue lysine 669 forms a Glycyl lysine isopeptide (Lys-Gly) (interchain with G-Cter in SUMO2) linkage. The segment at 753–776 (HPCPYCTHKTYYPEVLWMHKRIWH) adopts a C2H2-type 9; atypical zinc-finger fold. Disordered regions lie at residues 831–996 (TQVP…EPSV) and 1013–1040 (RGEA…AEGQ). A compositionally biased stretch (polar residues) spans 914–928 (GSGSLSRSTTPTPSV). Glycyl lysine isopeptide (Lys-Gly) (interchain with G-Cter in SUMO2) cross-links involve residues lysine 1032 and lysine 1051. Residues 1092–1114 (FVCVECGKSFHQPSQLRAHLRAH) form a C2H2-type 10 zinc finger. Positions 1123 to 1157 (PRDSEVHTASTDAPKQGRDHTTPGTVPAGPLRKGI) are disordered.

The protein belongs to the krueppel C2H2-type zinc-finger protein family. In terms of assembly, interacts with PRDM16; the interaction is direct and may play a role in the transcription of brown adipose tissue-specific genes. Interacts with PWWP2B. Interacts with HDAC1; this interaction is enhanced in the presence of PWWP2B. As to expression, expressed by adipocytes more specifically in brown adipose tissue compared to white adipose tissue (WAT).

It localises to the nucleus. Its function is as follows. Transcriptional regulator that binds to the promoter and activates the transcription of genes promoting brown adipose tissue (BAT) differentiation. Among brown adipose tissue-specific genes, binds the proximal region of the promoter of the UCP1 gene to activate its transcription and thereby regulate thermogenesis. May also play a role in the cellular response to replication stress. The chain is Zinc finger protein 516 from Mus musculus (Mouse).